The following is a 2412-amino-acid chain: Centrosomal protein of 295 kDa (2412 aa).

The necessary for centriole targeting and microtubule association stretch occupies residues 1–540; the sequence is MKRKGMNTKL…KQADQPEVCC (540 aa). Residue Ser-13 is modified to Phosphoserine. 5 coiled-coil regions span residues 63–84, 114–134, 209–273, 489–535, and 563–592; these read AEEL…LEKL, AERK…QKNQ, DAHL…DLAR, RRKQ…QADQ, and HQLL…VLKE. Disordered regions lie at residues 600-641 and 739-762; these read SALV…YQPV and LDSQ…PSPF. Ser-634 carries the phosphoserine modification. The segment covering 739 to 757 has biased composition (polar residues); sequence LDSQQISSEDSENISSKPS. Residues 811-841 are a coiled coil; it reads AQQGDLRFLQEQLELQKKVLQARQEAREKLL. 4 disordered regions span residues 871–891, 973–1005, 1158–1178, and 1216–1240; these read SASA…ATVS, DTQS…QDGS, LSSP…SVRS, and WVDT…QQTG. Composition is skewed to polar residues over residues 993-1005, 1158-1176, and 1224-1240; these read PSQS…QDGS, LSSP…SVSV, and FQSS…QQTG. Coiled-coil stretches lie at residues 1300–1327 and 1448–1493; these read QQDS…EAHE and QHDD…SKQI. A Phosphoserine modification is found at Ser-1573. 4 disordered regions span residues 1820-1895, 1916-1937, 2028-2048, and 2089-2111; these read LAHD…LSSV, ESFS…EETD, DLSS…SESS, and TEGS…SQHA. Residues 1836–1868 are compositionally biased toward basic and acidic residues; that stretch reads SKSHDDNAEAVKVKKSDVEDHAVLSHAVSKEEA. Over residues 1885–1895 the composition is skewed to polar residues; the sequence is QEISQEPLSSV. Basic and acidic residues predominate over residues 1921–1935; the sequence is QTEHLEQESTNKQEE. Polar residues predominate over residues 2089–2108; that stretch reads TEGSEQSFQQLRPEFSSQES. The segment at 2367 to 2412 is ALMS motif; that stretch reads SLQEAFMTRQTLTERSYQRQREIWNKTRLPQTKVSKEKLPTGCTGS.

Interacts (via ALMS motif) with microtubules; this interaction is direct.

It localises to the cytoplasm. Its subcellular location is the cytoskeleton. The protein resides in the microtubule organizing center. It is found in the centrosome. The protein localises to the centriole. It localises to the spindle. In terms of biological role, centriole-enriched microtubule-binding protein involved in centriole biogenesis. Essential for the generation of the distal portion of new-born centrioles in a CPAP- and CEP120-mediated elongation dependent manner during the cell cycle S/G2 phase after formation of the initiating cartwheel structure. Required for the recruitment of centriolar proteins, such as POC1B, POC5 and CEP135, into the distal portion of centrioles. Also required for centriole-to-centrosome conversion during mitotic progression, but is dispensable for cartwheel removal or centriole disengagement. Binds to and stabilizes centriolar microtubule. May be involved in ciliogenesis. The polypeptide is Centrosomal protein of 295 kDa (Mus musculus (Mouse)).